A 451-amino-acid polypeptide reads, in one-letter code: Bifunctional protein GlmU (451 aa).

The interval 1-229 (MQRHAIILAA…FDEIIGVNDR (229 aa)) is pyrophosphorylase. Residues 8–11 (LAAG), Lys22, Gln72, and 77–78 (GT) each bind UDP-N-acetyl-alpha-D-glucosamine. Asp102 contacts Mg(2+). The UDP-N-acetyl-alpha-D-glucosamine site is built by Gly139, Glu154, and Asn227. Asn227 lines the Mg(2+) pocket. Positions 230–250 (LMLSEAEKALQQRINRYHMEN) are linker. Residues 251-451 (GVTIIDPSST…QVNKEGYLKK (201 aa)) are N-acetyltransferase. Residues Arg332 and Lys350 each coordinate UDP-N-acetyl-alpha-D-glucosamine. Catalysis depends on His362, which acts as the Proton acceptor. Residues Tyr365 and Asn376 each contribute to the UDP-N-acetyl-alpha-D-glucosamine site. Acetyl-CoA contacts are provided by residues 385–386 (NY), Ala422, and Arg439.

In the N-terminal section; belongs to the N-acetylglucosamine-1-phosphate uridyltransferase family. It in the C-terminal section; belongs to the transferase hexapeptide repeat family. Homotrimer. The cofactor is Mg(2+).

It is found in the cytoplasm. The enzyme catalyses alpha-D-glucosamine 1-phosphate + acetyl-CoA = N-acetyl-alpha-D-glucosamine 1-phosphate + CoA + H(+). The catalysed reaction is N-acetyl-alpha-D-glucosamine 1-phosphate + UTP + H(+) = UDP-N-acetyl-alpha-D-glucosamine + diphosphate. Its pathway is nucleotide-sugar biosynthesis; UDP-N-acetyl-alpha-D-glucosamine biosynthesis; N-acetyl-alpha-D-glucosamine 1-phosphate from alpha-D-glucosamine 6-phosphate (route II): step 2/2. The protein operates within nucleotide-sugar biosynthesis; UDP-N-acetyl-alpha-D-glucosamine biosynthesis; UDP-N-acetyl-alpha-D-glucosamine from N-acetyl-alpha-D-glucosamine 1-phosphate: step 1/1. It participates in bacterial outer membrane biogenesis; LPS lipid A biosynthesis. Catalyzes the last two sequential reactions in the de novo biosynthetic pathway for UDP-N-acetylglucosamine (UDP-GlcNAc). The C-terminal domain catalyzes the transfer of acetyl group from acetyl coenzyme A to glucosamine-1-phosphate (GlcN-1-P) to produce N-acetylglucosamine-1-phosphate (GlcNAc-1-P), which is converted into UDP-GlcNAc by the transfer of uridine 5-monophosphate (from uridine 5-triphosphate), a reaction catalyzed by the N-terminal domain. In Staphylococcus epidermidis, this protein is Bifunctional protein GlmU.